Here is a 386-residue protein sequence, read N- to C-terminus: METTNSRRVSSAQRQILATATVRFIEGLHEPAQDSMMCGDDELQSQERMKKRQRLYNKSKRDLVDLLRVYTCLNSVRMFTFVNFGRRIPLAWPEGYELVINNCRDENEYADEKLGELADLVCCRERLVVLGYVKKRGEIGSEPAYWFLKGDIVVLLGGAGRVYAHTWLLPQQLCRVGDTIDDFLRKGLKRFYYAHQLVSSLQFVVEDTEVDGVCSCRDVLCFRDRHIGRSFALRWPKNETLLFHRRRDSFVFVRCDEARRRLAEMCFFGSFGYKYFADAGRISLYVADDGRIFGFNDNDEDGRPRFVAENFQQFRRIGVIQYYKSYVFRREQPEWALLPTCHLSRMFYQKTWRQADEDLLFVKARNDERQEFPDAGTRSAVHDVVR.

This is Protein U3 (U3) from Human herpesvirus 6B (strain Z29) (HHV-6 variant B).